The primary structure comprises 245 residues: 5-oxoprolinase subunit A (245 aa).

It belongs to the LamB/PxpA family. As to quaternary structure, forms a complex composed of PxpA, PxpB and PxpC.

It catalyses the reaction 5-oxo-L-proline + ATP + 2 H2O = L-glutamate + ADP + phosphate + H(+). Catalyzes the cleavage of 5-oxoproline to form L-glutamate coupled to the hydrolysis of ATP to ADP and inorganic phosphate. The polypeptide is 5-oxoprolinase subunit A (Serratia proteamaculans (strain 568)).